The sequence spans 243 residues: tRNA1(Val) (adenine(37)-N6)-methyltransferase (243 aa).

It belongs to the methyltransferase superfamily. tRNA (adenine-N(6)-)-methyltransferase family.

The protein localises to the cytoplasm. The enzyme catalyses adenosine(37) in tRNA1(Val) + S-adenosyl-L-methionine = N(6)-methyladenosine(37) in tRNA1(Val) + S-adenosyl-L-homocysteine + H(+). Specifically methylates the adenine in position 37 of tRNA(1)(Val) (anticodon cmo5UAC). The polypeptide is tRNA1(Val) (adenine(37)-N6)-methyltransferase (Shewanella loihica (strain ATCC BAA-1088 / PV-4)).